Consider the following 128-residue polypeptide: DNA-directed RNA polymerase subunit omega (128 aa).

Positions 87–106 (ARSSQAAPKSAPGQEIGKSF) are disordered.

Belongs to the RNA polymerase subunit omega family. The RNAP catalytic core consists of 2 alpha, 1 beta, 1 beta' and 1 omega subunit. When a sigma factor is associated with the core the holoenzyme is formed, which can initiate transcription.

The enzyme catalyses RNA(n) + a ribonucleoside 5'-triphosphate = RNA(n+1) + diphosphate. Promotes RNA polymerase assembly. Latches the N- and C-terminal regions of the beta' subunit thereby facilitating its interaction with the beta and alpha subunits. The protein is DNA-directed RNA polymerase subunit omega of Anaplasma marginale (strain St. Maries).